The sequence spans 414 residues: Multifunctional CCA protein (414 aa).

ATP contacts are provided by glycine 8 and arginine 11. 2 residues coordinate CTP: glycine 8 and arginine 11. Mg(2+) contacts are provided by aspartate 21 and aspartate 23. Residues arginine 91, arginine 137, and arginine 140 each contribute to the ATP site. Residues arginine 91, arginine 137, and arginine 140 each contribute to the CTP site. The 102-residue stretch at 228-329 (TGIHTLMVLE…VKLFDKGDFW (102 aa)) folds into the HD domain.

This sequence belongs to the tRNA nucleotidyltransferase/poly(A) polymerase family. Bacterial CCA-adding enzyme type 1 subfamily. As to quaternary structure, monomer. Can also form homodimers and oligomers. Requires Mg(2+) as cofactor. Ni(2+) serves as cofactor.

The catalysed reaction is a tRNA precursor + 2 CTP + ATP = a tRNA with a 3' CCA end + 3 diphosphate. It catalyses the reaction a tRNA with a 3' CCA end + 2 CTP + ATP = a tRNA with a 3' CCACCA end + 3 diphosphate. Functionally, catalyzes the addition and repair of the essential 3'-terminal CCA sequence in tRNAs without using a nucleic acid template. Adds these three nucleotides in the order of C, C, and A to the tRNA nucleotide-73, using CTP and ATP as substrates and producing inorganic pyrophosphate. tRNA 3'-terminal CCA addition is required both for tRNA processing and repair. Also involved in tRNA surveillance by mediating tandem CCA addition to generate a CCACCA at the 3' terminus of unstable tRNAs. While stable tRNAs receive only 3'-terminal CCA, unstable tRNAs are marked with CCACCA and rapidly degraded. The protein is Multifunctional CCA protein of Shewanella frigidimarina (strain NCIMB 400).